Consider the following 715-residue polypeptide: Fatty acid oxidation complex subunit alpha (715 aa).

The enoyl-CoA hydratase stretch occupies residues 1–190 (MDMTSAFTLN…RVGLVDEVVP (190 aa)). The segment at 306–715 (GPLASVGVLG…WNSGETDLKE (410 aa)) is 3-hydroxyacyl-CoA dehydrogenase.

It in the N-terminal section; belongs to the enoyl-CoA hydratase/isomerase family. In the central section; belongs to the 3-hydroxyacyl-CoA dehydrogenase family. Heterotetramer of two alpha chains (FadJ) and two beta chains (FadI).

Its subcellular location is the cytoplasm. It catalyses the reaction a (3S)-3-hydroxyacyl-CoA = a (2E)-enoyl-CoA + H2O. The catalysed reaction is a 4-saturated-(3S)-3-hydroxyacyl-CoA = a (3E)-enoyl-CoA + H2O. The enzyme catalyses a (3S)-3-hydroxyacyl-CoA + NAD(+) = a 3-oxoacyl-CoA + NADH + H(+). It carries out the reaction (3S)-3-hydroxybutanoyl-CoA = (3R)-3-hydroxybutanoyl-CoA. It functions in the pathway lipid metabolism; fatty acid beta-oxidation. Its function is as follows. Catalyzes the formation of a hydroxyacyl-CoA by addition of water on enoyl-CoA. Also exhibits 3-hydroxyacyl-CoA epimerase and 3-hydroxyacyl-CoA dehydrogenase activities. The sequence is that of Fatty acid oxidation complex subunit alpha from Citrobacter koseri (strain ATCC BAA-895 / CDC 4225-83 / SGSC4696).